The primary structure comprises 396 residues: Multidrug resistance protein MdtL (396 aa).

Residues 1–4 (MFRY) are Cytoplasmic-facing. Residues 5 to 25 (LLCCFGLVLMYPTGIDMYLVG) form a helical membrane-spanning segment. Residues 26-41 (LPQIANQLGATEAQLH) lie on the Periplasmic side of the membrane. A helical membrane pass occupies residues 42-62 (IAFSVYLAGMATTMLFAGSLA). The Cytoplasmic portion of the chain corresponds to 63–64 (DR). A helical membrane pass occupies residues 65 to 85 (IGRKPITLFSALLFALASYFA). Over 86–92 (ARSQSSD) the chain is Periplasmic. The helical transmembrane segment at 93–113 (LFLVARFVQGVGAGCCYVVAF) threads the bilayer. Residues 114–131 (AILRDALDDKRRAKVLSM) are Cytoplasmic-facing. The chain crosses the membrane as a helical span at residues 132-152 (VNGVTCIIPVIAPVIGHLIML). Residues 153 to 157 (RFPWP) are Periplasmic-facing. Residues 158–178 (SLFYTMAVMGLLVFGLCLFVL) traverse the membrane as a helical segment. Residues 179–209 (RETYSKASFHSQTLPRVQTESFKQGFFISRV) lie on the Cytoplasmic side of the membrane. The chain crosses the membrane as a helical span at residues 210–230 (VITTLGVTTILSYVNVSPMLI). The Periplasmic portion of the chain corresponds to 231 to 242 (MGQMGFDRGQYS). A helical membrane pass occupies residues 243 to 263 (NTMAMTALVSMLASFSTPFLL). The Cytoplasmic segment spans residues 264–277 (NQFKEKSLILFSQT). Transmembrane regions (helical) follow at residues 278–298 (LFAA…GQLF) and 299–319 (NLLG…VTMS). The Cytoplasmic portion of the chain corresponds to 320-333 (QALSPFVARAGVAS). A helical transmembrane segment spans residues 334–354 (SLLGIAQVCTSALYIWVMGLL). The Periplasmic portion of the chain corresponds to 355–360 (EVSAIN). Residues 361–381 (ILLAILAVGALISITLMLAVP) form a helical membrane-spanning segment. At 382–396 (KLSEMVANEQIPESA) the chain is on the cytoplasmic side.

Belongs to the major facilitator superfamily. DHA1 family. MdtL (TC 2.A.1.2.22) subfamily.

The protein resides in the cell inner membrane. This Shewanella sp. (strain ANA-3) protein is Multidrug resistance protein MdtL.